Reading from the N-terminus, the 100-residue chain is Small ribosomal subunit protein uS14c (100 aa).

Positions 1–22 (MARKGLIQRENKRQKLEQKYHS) are disordered. The segment covering 7–20 (IQRENKRQKLEQKY) has biased composition (basic and acidic residues).

Belongs to the universal ribosomal protein uS14 family. As to quaternary structure, part of the 30S ribosomal subunit.

It localises to the plastid. The protein resides in the chloroplast. Functionally, binds 16S rRNA, required for the assembly of 30S particles. This chain is Small ribosomal subunit protein uS14c, found in Daucus carota (Wild carrot).